Reading from the N-terminus, the 115-residue chain is Large ribosomal subunit protein bL19 (115 aa).

The protein belongs to the bacterial ribosomal protein bL19 family.

This protein is located at the 30S-50S ribosomal subunit interface and may play a role in the structure and function of the aminoacyl-tRNA binding site. The sequence is that of Large ribosomal subunit protein bL19 from Streptococcus thermophilus (strain CNRZ 1066).